We begin with the raw amino-acid sequence, 212 residues long: ATP-dependent Clp protease proteolytic subunit (212 aa).

Residue Ser107 is the Nucleophile of the active site. His132 is an active-site residue.

Belongs to the peptidase S14 family. Fourteen ClpP subunits assemble into 2 heptameric rings which stack back to back to give a disk-like structure with a central cavity, resembling the structure of eukaryotic proteasomes.

Its subcellular location is the cytoplasm. It catalyses the reaction Hydrolysis of proteins to small peptides in the presence of ATP and magnesium. alpha-casein is the usual test substrate. In the absence of ATP, only oligopeptides shorter than five residues are hydrolyzed (such as succinyl-Leu-Tyr-|-NHMec, and Leu-Tyr-Leu-|-Tyr-Trp, in which cleavage of the -Tyr-|-Leu- and -Tyr-|-Trp bonds also occurs).. Its function is as follows. Cleaves peptides in various proteins in a process that requires ATP hydrolysis. Has a chymotrypsin-like activity. Plays a major role in the degradation of misfolded proteins. In Pseudoalteromonas atlantica (strain T6c / ATCC BAA-1087), this protein is ATP-dependent Clp protease proteolytic subunit.